The primary structure comprises 331 residues: Elongation factor Ts, mitochondrial (331 aa).

Residues 254–295 are disordered; the sequence is SPLTVGEMPEVREEEGEKKDGDKQDEEERSTDSDEDETQMLR. Over residues 262–275 the composition is skewed to basic and acidic residues; it reads PEVREEEGEKKDGD. Residues 276 to 291 are compositionally biased toward acidic residues; sequence KQDEEERSTDSDEDET.

It belongs to the EF-Ts family.

The protein resides in the mitochondrion. In terms of biological role, associates with the EF-Tu.GDP complex and induces the exchange of GDP to GTP. It remains bound to the aminoacyl-tRNA.EF-Tu.GTP complex up to the GTP hydrolysis stage on the ribosome. The polypeptide is Elongation factor Ts, mitochondrial (Branchiostoma floridae (Florida lancelet)).